The sequence spans 403 residues: MNIQSVRGFHDILGKDAKKFRKISDTARKILKLYNFEEIILPVVEYAELFQRSVGETTDIVQKEMFVFEDRKGRKLALRPEGTAGTVRAFIQHKLYALRPYVKLFYEGPMFRYERPQAGRYRQFHQIGAEVFGVAEPHADAEIIKIVYDILQALGIKGVVVEINSLGCKKDREAYREALLNYLTGVKEELCSDCISRMDRNPLRVLDCKVETCKVAVREAPKMIDFLCDECREHYEKLKNYLKALDIPFRENYNLVRGLDYYTRTVFEAVSDELGLTLIAGGRYDYLVEELGGPPTPALGFALGVERLMLLLPDEEEKEEVYFVIPFGDVHEYALRVADILRKKGKVVEYSYRKGGLKKQLEFADKLGVKYAVIIGEDEVKNQEVTIKDMETGEQRRVKLSEL.

It belongs to the class-II aminoacyl-tRNA synthetase family. Homodimer.

The protein resides in the cytoplasm. The enzyme catalyses tRNA(His) + L-histidine + ATP = L-histidyl-tRNA(His) + AMP + diphosphate + H(+). This chain is Histidine--tRNA ligase (hisS), found in Aquifex aeolicus (strain VF5).